A 231-amino-acid polypeptide reads, in one-letter code: NifU-like protein 1, chloroplastic (231 aa).

A chloroplast-targeting transit peptide spans Met1–Leu69.

It belongs to the NifU family. As to quaternary structure, homodimer; disulfide-linked. As to expression, predominantly expressed in floral stalks and siliques. Expressed in leaves, cauline leaves, flower stalks and flowers (at protein level).

Its subcellular location is the plastid. It localises to the chloroplast stroma. In terms of biological role, molecular scaffold for [Fe-S] cluster assembly of chloroplastic iron-sulfur proteins. The polypeptide is NifU-like protein 1, chloroplastic (NIFU1) (Arabidopsis thaliana (Mouse-ear cress)).